The chain runs to 326 residues: Acetyl-coenzyme A carboxylase carboxyl transferase subunit beta (326 aa).

The 284-residue stretch at 25–308 (LWVKCPASGE…RRDDRSTLQL (284 aa)) folds into the CoA carboxyltransferase N-terminal domain. Residues 298 to 326 (RRRDDRSTLQLTPPKTHAPKPPEPKVKPD) are disordered. The span at 317 to 326 (KPPEPKVKPD) shows a compositional bias: basic and acidic residues.

It belongs to the AccD/PCCB family. As to quaternary structure, acetyl-CoA carboxylase is a heterohexamer composed of biotin carboxyl carrier protein (AccB), biotin carboxylase (AccC) and two subunits each of ACCase subunit alpha (AccA) and ACCase subunit beta (AccD).

Its subcellular location is the cytoplasm. The catalysed reaction is N(6)-carboxybiotinyl-L-lysyl-[protein] + acetyl-CoA = N(6)-biotinyl-L-lysyl-[protein] + malonyl-CoA. It participates in lipid metabolism; malonyl-CoA biosynthesis; malonyl-CoA from acetyl-CoA: step 1/1. Functionally, component of the acetyl coenzyme A carboxylase (ACC) complex. Biotin carboxylase (BC) catalyzes the carboxylation of biotin on its carrier protein (BCCP) and then the CO(2) group is transferred by the transcarboxylase to acetyl-CoA to form malonyl-CoA. In Hyphomonas neptunium (strain ATCC 15444), this protein is Acetyl-coenzyme A carboxylase carboxyl transferase subunit beta.